Here is a 497-residue protein sequence, read N- to C-terminus: Probable malate:quinone oxidoreductase (497 aa).

This sequence belongs to the MQO family. Requires FAD as cofactor.

The enzyme catalyses (S)-malate + a quinone = a quinol + oxaloacetate. The protein operates within carbohydrate metabolism; tricarboxylic acid cycle; oxaloacetate from (S)-malate (quinone route): step 1/1. The polypeptide is Probable malate:quinone oxidoreductase (Exiguobacterium sibiricum (strain DSM 17290 / CCUG 55495 / CIP 109462 / JCM 13490 / 255-15)).